Reading from the N-terminus, the 463-residue chain is ATP-dependent protease ATPase subunit HslU (463 aa).

Residues isoleucine 19, 61-66 (GVGKTE), aspartate 277, glutamate 341, and arginine 413 contribute to the ATP site.

This sequence belongs to the ClpX chaperone family. HslU subfamily. A double ring-shaped homohexamer of HslV is capped on each side by a ring-shaped HslU homohexamer. The assembly of the HslU/HslV complex is dependent on binding of ATP.

The protein localises to the cytoplasm. Its function is as follows. ATPase subunit of a proteasome-like degradation complex; this subunit has chaperone activity. The binding of ATP and its subsequent hydrolysis by HslU are essential for unfolding of protein substrates subsequently hydrolyzed by HslV. HslU recognizes the N-terminal part of its protein substrates and unfolds these before they are guided to HslV for hydrolysis. In Bacillus cereus (strain AH187), this protein is ATP-dependent protease ATPase subunit HslU.